A 476-amino-acid chain; its full sequence is Eukaryotic translation initiation factor 3 subunit L (476 aa).

In terms of domain architecture, PCI spans 257–452 (DAIRMFSHIL…DLDYALEKDL (196 aa)).

Belongs to the eIF-3 subunit L family. Component of the eukaryotic translation initiation factor 3 (eIF-3) complex.

The protein localises to the cytoplasm. Component of the eukaryotic translation initiation factor 3 (eIF-3) complex, which is involved in protein synthesis of a specialized repertoire of mRNAs and, together with other initiation factors, stimulates binding of mRNA and methionyl-tRNAi to the 40S ribosome. The eIF-3 complex specifically targets and initiates translation of a subset of mRNAs involved in cell proliferation. The protein is Eukaryotic translation initiation factor 3 subunit L of Aspergillus terreus (strain NIH 2624 / FGSC A1156).